Here is a 454-residue protein sequence, read N- to C-terminus: NADH-quinone oxidoreductase subunit H (454 aa).

The next 9 helical transmembrane spans lie at 18 to 38, 88 to 108, 131 to 151, 172 to 192, 206 to 226, 256 to 276, 296 to 316, 328 to 348, and 360 to 380; these read WWLV…TVLF, VVYV…IAVI, LPIA…GIVL, MISY…YSGS, WYIV…VGET, FMLA…TLFL, WWPM…FIWL, LMKL…MLVA, and FADI…LSFV. The tract at residues 395–454 is disordered; that stretch reads AEEPAAFDPMAGGFPVPPLPGQTLPPVPRRRPRRDRELIVSGGPDTASDGPANGKEASDG. The span at 409 to 421 shows a compositional bias: pro residues; the sequence is PVPPLPGQTLPPV.

It belongs to the complex I subunit 1 family. NDH-1 is composed of 14 different subunits. Subunits NuoA, H, J, K, L, M, N constitute the membrane sector of the complex.

The protein localises to the cell membrane. It catalyses the reaction a quinone + NADH + 5 H(+)(in) = a quinol + NAD(+) + 4 H(+)(out). Functionally, NDH-1 shuttles electrons from NADH, via FMN and iron-sulfur (Fe-S) centers, to quinones in the respiratory chain. The immediate electron acceptor for the enzyme in this species is believed to be ubiquinone. Couples the redox reaction to proton translocation (for every two electrons transferred, four hydrogen ions are translocated across the cytoplasmic membrane), and thus conserves the redox energy in a proton gradient. This subunit may bind ubiquinone. This Streptomyces avermitilis (strain ATCC 31267 / DSM 46492 / JCM 5070 / NBRC 14893 / NCIMB 12804 / NRRL 8165 / MA-4680) protein is NADH-quinone oxidoreductase subunit H.